Reading from the N-terminus, the 466-residue chain is Adenylosuccinate lyase (466 aa).

Substrate contacts are provided by residues 21–22 (RY), 97–99 (NHD), and 130–131 (TS). Catalysis depends on His-180, which acts as the Proton donor/acceptor. Position 259 (Gln-259) interacts with substrate. Ser-307 serves as the catalytic Proton donor/acceptor. Substrate contacts are provided by Arg-347, Ser-352, and Arg-356.

Belongs to the lyase 1 family. Adenylosuccinate lyase subfamily. As to quaternary structure, homotetramer. Residues from neighboring subunits contribute catalytic and substrate-binding residues to each active site.

The catalysed reaction is N(6)-(1,2-dicarboxyethyl)-AMP = fumarate + AMP. It carries out the reaction (2S)-2-[5-amino-1-(5-phospho-beta-D-ribosyl)imidazole-4-carboxamido]succinate = 5-amino-1-(5-phospho-beta-D-ribosyl)imidazole-4-carboxamide + fumarate. The protein operates within purine metabolism; AMP biosynthesis via de novo pathway; AMP from IMP: step 2/2. It functions in the pathway purine metabolism; IMP biosynthesis via de novo pathway; 5-amino-1-(5-phospho-D-ribosyl)imidazole-4-carboxamide from 5-amino-1-(5-phospho-D-ribosyl)imidazole-4-carboxylate: step 2/2. This Dictyostelium discoideum (Social amoeba) protein is Adenylosuccinate lyase (purB).